The following is a 510-amino-acid chain: Cytochrome P450 monooxygenase BOT1 (510 aa).

A helical membrane pass occupies residues 16–36 (PLAWAALILASFTLYSVQLVV). Cysteine 454 is a binding site for heme. Asparagine 476 carries N-linked (GlcNAc...) asparagine glycosylation.

Belongs to the cytochrome P450 family. The cofactor is heme.

It localises to the membrane. It participates in secondary metabolite biosynthesis. Functionally, cytochrome P450 monooxygenase; part of the gene cluster that mediates the biosynthesis of botrydial. Botrydial is necessary for colonization of plant tissue by the T4 strain. It is a strain-dependent virulence factor since highly aggressive strains like SAS56 or B05 still retain substantial virulence when botrydial synthesis is impaired, since they produce also botcinic acid. The first step of botrydial biosynthesis is performed by the sesquiterpene synthase BOT2 which catalyzes the cyclization of farnesyl diphosphate (FPP) to presilphiperfolan-8-beta-ol (PSP). The cytochrome P450 monooxygenase BOT4 then catalyzes the hydroxylation at C-4 to give a probotryane intermediate. Acetylation of the hydroxyl at C-4 is carried out by the acetyltransferase BOT5, followed by the combined action of the P450 monooxygenases BOT3 and BOT1, to yield finally the glycol, via the regio- and stereospecific hydroxylations at C-10 and C-15 of the probotryane intermediates, respectively. The cleavage of the C10-C15 bond of probotryane skeleton is an intriguing and chemically important reaction, which could be mediated by some of the monooxygenases or by a combination of them. It is possible that either BOT3 or BOT1 would oxidize either the 10- or the 15-hydroxy group to the hydroperoxide derivative, which would then undergo heterolytic fragmentation to give the dialdehyde botrydial. Finally, the dehydrogenase BOT7 might be involved in the conversion of botrydial to dihydrobotrydial. In Botryotinia fuckeliana (Noble rot fungus), this protein is Cytochrome P450 monooxygenase BOT1.